The sequence spans 424 residues: PDZ and LIM domain protein 7 (424 aa).

Residues methionine 1–glutamine 85 enclose the PDZ domain. Serine 78 bears the Phosphoserine mark. Positions leucine 81 to aspartate 98 are enriched in polar residues. The tract at residues leucine 81–methionine 221 is disordered. Threonine 96 bears the Phosphothreonine mark. Residues serine 110 to proline 123 show a composition bias toward basic and acidic residues. The span at glutamate 174–arginine 187 shows a compositional bias: pro residues. Residues lysine 204–methionine 221 are compositionally biased toward polar residues. 3 LIM zinc-binding domains span residues proline 247–alanine 305, proline 306–threonine 365, and lysine 366–valine 424.

In terms of assembly, binds via its LIM zinc-binding 3 domain (LIM 3) domain to endocytic codes of INSR, but not with those of IGF1R, LDLR, TFRC, or EGFR. Interacts with various PKC isoforms through the LIM zinc-binding domains. Binds to RET in a phosphorylation-independent manner via its LIM zinc-binding 2 domain (LIM 2). Probably part of a complex with SHC and the RET dimer. Interacts with TPM2, TBX4 and TBX5.

The protein resides in the cytoplasm. Its subcellular location is the cytoskeleton. Its function is as follows. May function as a scaffold on which the coordinated assembly of proteins can occur. May play a role as an adapter that, via its PDZ domain, localizes LIM-binding proteins to actin filaments of both skeletal muscle and nonmuscle tissues. Involved in both of the two fundamental mechanisms of bone formation, direct bone formation (e.g. embryonic flat bones mandible and cranium), and endochondral bone formation (e.g. embryonic long bone development). Plays a role during fracture repair. Involved in BMP6 signaling pathway. The protein is PDZ and LIM domain protein 7 (PDLIM7) of Bos taurus (Bovine).